Reading from the N-terminus, the 363-residue chain is NAD(P)H-quinone oxidoreductase subunit 1, chloroplastic (363 aa).

The next 6 helical transmembrane spans lie at 28–48, 98–118, 127–147, 248–268, 300–320, and 343–363; these read WVLV…LVIV, FSIG…VIPF, LPIG…GLLM, YSGI…LVSS, VFGM…FLFI, and FLLP…LFSL.

Belongs to the complex I subunit 1 family. In terms of assembly, NDH is composed of at least 16 different subunits, 5 of which are encoded in the nucleus.

It is found in the plastid. The protein resides in the chloroplast thylakoid membrane. It catalyses the reaction a plastoquinone + NADH + (n+1) H(+)(in) = a plastoquinol + NAD(+) + n H(+)(out). The enzyme catalyses a plastoquinone + NADPH + (n+1) H(+)(in) = a plastoquinol + NADP(+) + n H(+)(out). In terms of biological role, NDH shuttles electrons from NAD(P)H:plastoquinone, via FMN and iron-sulfur (Fe-S) centers, to quinones in the photosynthetic chain and possibly in a chloroplast respiratory chain. The immediate electron acceptor for the enzyme in this species is believed to be plastoquinone. Couples the redox reaction to proton translocation, and thus conserves the redox energy in a proton gradient. The protein is NAD(P)H-quinone oxidoreductase subunit 1, chloroplastic of Cucumis sativus (Cucumber).